The primary structure comprises 211 residues: ATP-dependent Clp protease proteolytic subunit (211 aa).

Ser106 functions as the Nucleophile in the catalytic mechanism. The active site involves His131.

This sequence belongs to the peptidase S14 family. As to quaternary structure, fourteen ClpP subunits assemble into 2 heptameric rings which stack back to back to give a disk-like structure with a central cavity, resembling the structure of eukaryotic proteasomes.

It is found in the cytoplasm. It catalyses the reaction Hydrolysis of proteins to small peptides in the presence of ATP and magnesium. alpha-casein is the usual test substrate. In the absence of ATP, only oligopeptides shorter than five residues are hydrolyzed (such as succinyl-Leu-Tyr-|-NHMec, and Leu-Tyr-Leu-|-Tyr-Trp, in which cleavage of the -Tyr-|-Leu- and -Tyr-|-Trp bonds also occurs).. Functionally, cleaves peptides in various proteins in a process that requires ATP hydrolysis. Has a chymotrypsin-like activity. Plays a major role in the degradation of misfolded proteins. This Nitrobacter hamburgensis (strain DSM 10229 / NCIMB 13809 / X14) protein is ATP-dependent Clp protease proteolytic subunit.